The sequence spans 601 residues: Elongation factor 4 (601 aa).

In terms of domain architecture, tr-type G spans 6–188; the sequence is SHIRNFSIIA…QIVHRVPAPE (183 aa). GTP-binding positions include 18-23 and 135-138; these read DHGKST and NKID.

It belongs to the TRAFAC class translation factor GTPase superfamily. Classic translation factor GTPase family. LepA subfamily.

It localises to the cell inner membrane. The catalysed reaction is GTP + H2O = GDP + phosphate + H(+). Required for accurate and efficient protein synthesis under certain stress conditions. May act as a fidelity factor of the translation reaction, by catalyzing a one-codon backward translocation of tRNAs on improperly translocated ribosomes. Back-translocation proceeds from a post-translocation (POST) complex to a pre-translocation (PRE) complex, thus giving elongation factor G a second chance to translocate the tRNAs correctly. Binds to ribosomes in a GTP-dependent manner. In Anaeromyxobacter dehalogenans (strain 2CP-1 / ATCC BAA-258), this protein is Elongation factor 4.